The following is a 225-amino-acid chain: MARMKARSAKGKRVAKDTWKSKVWYDIYTPQSFGGDVIGQTPANDPATLIGRISEISLRDLTNEHSKHMTRMYFKVDGVSGNNATSQFVGHDTTREYLKSQVRRRRSKINAIVDVRTKDGFKVRVKALVLTAVRARDHHKTEIRINMEQIIRHMAKETAFAEFVHAMLMGGLGSKIYGDCKKMFPLKRVEIFKSEVLEFGKAVEAPVEEPAAEEVAEAPAAETQE.

The span at 206 to 216 (PVEEPAAEEVA) shows a compositional bias: acidic residues. The tract at residues 206 to 225 (PVEEPAAEEVAEAPAAETQE) is disordered.

This sequence belongs to the eukaryotic ribosomal protein eS1 family.

This Methanococcus maripaludis (strain C5 / ATCC BAA-1333) protein is Small ribosomal subunit protein eS1.